Here is a 437-residue protein sequence, read N- to C-terminus: UDP-N-acetylmuramate--L-alanine ligase (437 aa).

Gly-108 to Ser-114 is an ATP binding site.

This sequence belongs to the MurCDEF family.

The protein resides in the cytoplasm. It carries out the reaction UDP-N-acetyl-alpha-D-muramate + L-alanine + ATP = UDP-N-acetyl-alpha-D-muramoyl-L-alanine + ADP + phosphate + H(+). The protein operates within cell wall biogenesis; peptidoglycan biosynthesis. Functionally, cell wall formation. The protein is UDP-N-acetylmuramate--L-alanine ligase of Staphylococcus epidermidis (strain ATCC 12228 / FDA PCI 1200).